Reading from the N-terminus, the 191-residue chain is Ion-translocating oxidoreductase complex subunit B (191 aa).

The tract at residues 1–26 is hydrophobic; sequence MSLVLVAVLALLGLCLIAGAILGFAA. Positions 32–90 constitute a 4Fe-4S domain; sequence EGDPIAEQINALLPQTQCGQCGYPGCKPYAEAIAGGDKINKCPPGGEATIQALADLLDV. Positions 49, 52, 57, 73, 114, 117, 120, 124, 144, 147, 150, and 154 each coordinate [4Fe-4S] cluster. 4Fe-4S ferredoxin-type domains lie at 105-134 and 135-164; these read MVAFIREAECIGCTKCIQACPVDAIVGAAR and QMHTVIVSECTGCDLCVEPCPVDCIDMIEV.

This sequence belongs to the 4Fe4S bacterial-type ferredoxin family. RnfB subfamily. In terms of assembly, the complex is composed of six subunits: RnfA, RnfB, RnfC, RnfD, RnfE and RnfG. The cofactor is [4Fe-4S] cluster.

The protein localises to the cell inner membrane. In terms of biological role, part of a membrane-bound complex that couples electron transfer with translocation of ions across the membrane. In Ectopseudomonas mendocina (strain ymp) (Pseudomonas mendocina), this protein is Ion-translocating oxidoreductase complex subunit B.